The sequence spans 369 residues: 4-hydroxy-3-methylbut-2-en-1-yl diphosphate synthase (flavodoxin) (369 aa).

4 residues coordinate [4Fe-4S] cluster: Cys270, Cys273, Cys305, and Glu312.

It belongs to the IspG family. It depends on [4Fe-4S] cluster as a cofactor.

It carries out the reaction (2E)-4-hydroxy-3-methylbut-2-enyl diphosphate + oxidized [flavodoxin] + H2O + 2 H(+) = 2-C-methyl-D-erythritol 2,4-cyclic diphosphate + reduced [flavodoxin]. It participates in isoprenoid biosynthesis; isopentenyl diphosphate biosynthesis via DXP pathway; isopentenyl diphosphate from 1-deoxy-D-xylulose 5-phosphate: step 5/6. In terms of biological role, converts 2C-methyl-D-erythritol 2,4-cyclodiphosphate (ME-2,4cPP) into 1-hydroxy-2-methyl-2-(E)-butenyl 4-diphosphate. This is 4-hydroxy-3-methylbut-2-en-1-yl diphosphate synthase (flavodoxin) from Pseudomonas putida (strain W619).